The following is a 403-amino-acid chain: Envelope glycoprotein D (403 aa).

The signal sequence occupies residues 1–34; that stretch reads MNRYRYESIFFRYISSTRMILIICLLLGIGDMSA. At 35-357 the chain is on the virion surface side; that stretch reads MGLKKDNSPI…ISTEKKSRTQ (323 aa). N-linked (GlcNAc...) asparagine; by host glycans are attached at residues asparagine 87 and asparagine 138. Disulfide bonds link cysteine 88–cysteine 209, cysteine 127–cysteine 222, and cysteine 139–cysteine 148. Asparagine 230 and asparagine 306 each carry an N-linked (GlcNAc...) asparagine; by host glycan. The chain crosses the membrane as a helical span at residues 358-378; it reads IIISLVVLCVMFCFIVIGSGI. Over 379 to 403 the chain is Intravirion; the sequence is WILRKHRKTVMYDRRRPSRRAYSRL.

This sequence belongs to the herpesviridae glycoprotein D family.

It is found in the virion membrane. Functionally, envelope glycoprotein that binds to host cell entry receptors, promoting the virus entry into host cells. May trigger fusion with host membrane, by recruiting the fusion machinery composed of gB and gH/gL. In Gallus gallus (Chicken), this protein is Envelope glycoprotein D (MDV094).